Here is a 652-residue protein sequence, read N- to C-terminus: tRNA-guanine(15) transglycosylase (652 aa).

Aspartate 88 serves as the catalytic Nucleophile. Substrate is bound by residues aspartate 123 and alanine 194. Zn(2+)-binding residues include cysteine 280, cysteine 282, and cysteine 285. The region spanning 577–652 is the PUA domain; sequence KYRVVIDSEV…AAVSVRSGFK (76 aa).

It belongs to the archaeosine tRNA-ribosyltransferase family. Zn(2+) serves as cofactor.

It catalyses the reaction guanosine(15) in tRNA + 7-cyano-7-deazaguanine = 7-cyano-7-carbaguanosine(15) in tRNA + guanine. The protein operates within tRNA modification; archaeosine-tRNA biosynthesis. Its function is as follows. Exchanges the guanine residue with 7-cyano-7-deazaguanine (preQ0) at position 15 in the dihydrouridine loop (D-loop) of archaeal tRNAs. In Methanococcus aeolicus (strain ATCC BAA-1280 / DSM 17508 / OCM 812 / Nankai-3), this protein is tRNA-guanine(15) transglycosylase.